Consider the following 227-residue polypeptide: Cleavage and polyadenylation specificity factor subunit 5 (227 aa).

Residues 76-201 form the Nudix hydrolase domain; sequence MRRTVEGVLI…KLVAAPLFEL (126 aa). The tract at residues 102–104 is interaction with RNA; sequence TFF. The short motif at 109–130 is the Nudix box element; it reads GELNPGEDEVEGLKRLMTEILG.

Belongs to the Nudix hydrolase family. CPSF5 subfamily. Homodimer (via N- and C-terminus); binds RNA as homodimer. Component of the cleavage factor Im (CFIm) complex.

The protein resides in the nucleus. The protein localises to the cytoplasm. In terms of biological role, component of the cleavage factor Im (CFIm) complex that functions as an activator of the pre-mRNA 3'-end cleavage and polyadenylation processing required for the maturation of pre-mRNA into functional mRNAs. CFIm contributes to the recruitment of multiprotein complexes on specific sequences on the pre-mRNA 3'-end, so called cleavage and polyadenylation signals (pA signals). Most pre-mRNAs contain multiple pA signals, resulting in alternative cleavage and polyadenylation (APA) producing mRNAs with variable 3'-end formation. The CFIm complex acts as a key regulator of cleavage and polyadenylation site choice during APA through its binding to 5'-UGUA-3' elements localized in the 3'-untranslated region (UTR) for a huge number of pre-mRNAs. Binds to 5'-UGUA-3' elements localized upstream of pA signals that act as enhancers of pre-mRNA 3'-end processing. The homodimer mediates simultaneous sequence-specific recognition of two 5'-UGUA-3' elements within the pre-mRNA. Plays a role in somatic cell fate transitions and pluripotency by regulating widespread changes in gene expression through an APA-dependent function. Binds to chromatin. Binds to, but does not hydrolyze mono- and di-adenosine nucleotides. The protein is Cleavage and polyadenylation specificity factor subunit 5 of Xenopus laevis (African clawed frog).